The chain runs to 751 residues: Catalase-peroxidase 2 (751 aa).

The N-terminal stretch at 1–27 (MFKKTVPLLSAVAIAISFSAGTGVANA) is a signal peptide. A cross-link (tryptophyl-tyrosyl-methioninium (Trp-Tyr) (with M-264)) is located at residues 115–238 (WHGAGTYRVQ…LAAVQMGLIY (124 aa)). The active-site Proton acceptor is the H116. Positions 238–264 (YVNPEGPNGKPDPLLAAKDIRDTFGRM) form a cross-link, tryptophyl-tyrosyl-methioninium (Tyr-Met) (with W-115). Heme b is bound at residue H279.

Belongs to the peroxidase family. Peroxidase/catalase subfamily. In terms of assembly, homodimer or homotetramer. It depends on heme b as a cofactor. Formation of the three residue Trp-Tyr-Met cross-link is important for the catalase, but not the peroxidase activity of the enzyme.

The catalysed reaction is H2O2 + AH2 = A + 2 H2O. The enzyme catalyses 2 H2O2 = O2 + 2 H2O. In terms of biological role, bifunctional enzyme with both catalase and broad-spectrum peroxidase activity. In Idiomarina loihiensis (strain ATCC BAA-735 / DSM 15497 / L2-TR), this protein is Catalase-peroxidase 2.